A 189-amino-acid polypeptide reads, in one-letter code: GTPase HRas (189 aa).

Residue 10–17 coordinates GTP; it reads GARGVGKS. An Effector region motif is present at residues 32-40; sequence YDPTIEDSY. GTP-binding positions include 57–61 and 116–119; these read DTAGQ and NKCD. 2 S-palmitoyl cysteine; by host lipidation sites follow: C181 and C184. Position 186 is a cysteine methyl ester; by host (C186). C186 is lipidated: S-farnesyl cysteine; by host. Residues 187–189 constitute a propeptide, removed in mature form; that stretch reads VLS.

Belongs to the small GTPase superfamily. Ras family.

It is found in the host cell membrane. The enzyme catalyses GTP + H2O = GDP + phosphate + H(+). With respect to regulation, alternates between an inactive form bound to GDP and an active form bound to GTP. Activated by a guanine nucleotide-exchange factor (GEF) and inactivated by a GTPase-activating protein (GAP). The sequence is that of GTPase HRas (H-RAS) from Mus musculus (Mouse).